Consider the following 327-residue polypeptide: uncharacterized protein (327 aa).

The signal sequence occupies residues 1-24 (MAMACLCLANISWATVCANSTGVA).

The protein belongs to the fimbrial protein family.

The protein localises to the fimbrium. In terms of biological role, part of the sfmACDHF fimbrial operon. Could contribute to adhesion to various surfaces in specific environmental niches. Increases adhesion to eukaryotic T24 bladder epithelial cells in the absence of fim genes. This is an uncharacterized protein from Escherichia coli (strain K12).